Here is a 338-residue protein sequence, read N- to C-terminus: Heat-inducible transcription repressor HrcA (338 aa).

The protein belongs to the HrcA family.

In terms of biological role, negative regulator of class I heat shock genes (grpE-dnaK-dnaJ and groELS operons). Prevents heat-shock induction of these operons. This chain is Heat-inducible transcription repressor HrcA, found in Nitrosomonas eutropha (strain DSM 101675 / C91 / Nm57).